The primary structure comprises 874 residues: Leucine--tRNA ligase (874 aa).

Residues 43–53 carry the 'HIGH' region motif; the sequence is PYPSGRIHIGH. The short motif at 630–634 is the 'KMSKS' region element; sequence KMSKS. Position 633 (K633) interacts with ATP.

The protein belongs to the class-I aminoacyl-tRNA synthetase family.

The protein localises to the cytoplasm. The enzyme catalyses tRNA(Leu) + L-leucine + ATP = L-leucyl-tRNA(Leu) + AMP + diphosphate. The polypeptide is Leucine--tRNA ligase (Bradyrhizobium sp. (strain ORS 278)).